Here is a 102-residue protein sequence, read N- to C-terminus: MQQARVRLAGTSPEDLDDICADVREIADSTGVALSGPIPLPTKTLEIPSRKSPDGEGTATWEHWEMRVHKRLIDIDADERALRQLMRVQVPNDVSIEIVLED.

A disordered region spans residues 35–58 (SGPIPLPTKTLEIPSRKSPDGEGT).

The protein belongs to the universal ribosomal protein uS10 family. As to quaternary structure, part of the 30S ribosomal subunit.

In terms of biological role, involved in the binding of tRNA to the ribosomes. This Halorubrum lacusprofundi (strain ATCC 49239 / DSM 5036 / JCM 8891 / ACAM 34) protein is Small ribosomal subunit protein uS10.